The following is a 421-amino-acid chain: 4-hydroxy-3-methylbut-2-en-1-yl diphosphate synthase (flavodoxin) (421 aa).

[4Fe-4S] cluster contacts are provided by Cys-298, Cys-301, Cys-344, and Glu-351.

The protein belongs to the IspG family. It depends on [4Fe-4S] cluster as a cofactor.

It catalyses the reaction (2E)-4-hydroxy-3-methylbut-2-enyl diphosphate + oxidized [flavodoxin] + H2O + 2 H(+) = 2-C-methyl-D-erythritol 2,4-cyclic diphosphate + reduced [flavodoxin]. The protein operates within isoprenoid biosynthesis; isopentenyl diphosphate biosynthesis via DXP pathway; isopentenyl diphosphate from 1-deoxy-D-xylulose 5-phosphate: step 5/6. In terms of biological role, converts 2C-methyl-D-erythritol 2,4-cyclodiphosphate (ME-2,4cPP) into 1-hydroxy-2-methyl-2-(E)-butenyl 4-diphosphate. This chain is 4-hydroxy-3-methylbut-2-en-1-yl diphosphate synthase (flavodoxin), found in Neisseria meningitidis serogroup C (strain 053442).